The following is a 73-amino-acid chain: Disintegrin trigramin-gamma (73 aa).

The 73-residue stretch at 1–73 (EAGEDCDCGS…AGCPRNPLHA (73 aa)) folds into the Disintegrin domain. Disulfide bonds link Cys6–Cys21, Cys8–Cys16, Cys15–Cys38, Cys29–Cys35, Cys34–Cys59, and Cys47–Cys66. The Cell attachment site motif lies at 51–53 (RGD).

The protein belongs to the venom metalloproteinase (M12B) family. P-II subfamily. P-IIa sub-subfamily. In terms of assembly, monomer (disintegrin). In terms of tissue distribution, expressed by the venom gland.

The protein localises to the secreted. Its function is as follows. Inhibits fibrinogen interaction with platelets. Acts by binding to alpha-IIb/beta-3 (ITGA2B/ITGB3) on the platelet surface and inhibits aggregation induced by ADP, thrombin, platelet-activating factor and collagen. The sequence is that of Disintegrin trigramin-gamma from Craspedocephalus gramineus (Bamboo pit viper).